Here is a 382-residue protein sequence, read N- to C-terminus: MAELRGILLLLLYMSHSSSAICGIQKANIVDQLHENLVSSTEFPWVVSIQDKQYTHLAFGCILSEFWILSTASALQNRKEVIAVVGIANMDPRNADHKEYSINAIIPHENFNNNSMRNNIALLRTDSAIHFDDLVQPICFLGKSLHKPTALKNCWVAGWNPTSATGNHMTMSILRRISVNDIEVCPLHRQQKTECASHTNKDSNVCLGEPGNPMMCQVKKLDLWILRGLLAYGSDLCPGLLLYTSVDDYSNWIIAKTRKAGPPLSSIHPWEKLVLELPFHQSNIALTKNSYSVHSYAWPQSYSQGLRMSTMYDKQKDVWQNLRVNGQQEAGRPSNVAIQPMYYDYYGGEAGEGRAVAGQNRLHWSQERILMSFVLVFLGSGV.

The first 20 residues, 1-20 (MAELRGILLLLLYMSHSSSA), serve as a signal peptide directing secretion. Positions 29-258 (IVDQLHENLV…YSNWIIAKTR (230 aa)) constitute a Peptidase S1 domain. Asn113 is a glycosylation site (N-linked (GlcNAc...) asparagine). Disulfide bonds link Cys154–Cys216, Cys185–Cys195, and Cys206–Cys237.

The protein belongs to the peptidase S1 family. Plasma kallikrein subfamily.

It localises to the secreted. The sequence is that of Inactive serine protease 54 (Prss54) from Rattus norvegicus (Rat).